The following is a 112-amino-acid chain: Large ribosomal subunit protein eL30 (112 aa).

This sequence belongs to the eukaryotic ribosomal protein eL30 family.

In Euphorbia esula (Leafy spurge), this protein is Large ribosomal subunit protein eL30 (RPL30).